We begin with the raw amino-acid sequence, 827 residues long: Probable beta-glucosidase H (827 aa).

Asp-223 is an active-site residue. Positions 387–546 (RLLTNAVMHF…DSAEMVRSAV (160 aa)) constitute a PA14 domain. N-linked (GlcNAc...) asparagine glycans are attached at residues Asn-471, Asn-594, Asn-600, and Asn-625.

This sequence belongs to the glycosyl hydrolase 3 family.

The protein resides in the secreted. It catalyses the reaction Hydrolysis of terminal, non-reducing beta-D-glucosyl residues with release of beta-D-glucose.. The protein operates within glycan metabolism; cellulose degradation. In terms of biological role, beta-glucosidases are one of a number of cellulolytic enzymes involved in the degradation of cellulosic biomass. Catalyzes the last step releasing glucose from the inhibitory cellobiose. This Aspergillus oryzae (strain ATCC 42149 / RIB 40) (Yellow koji mold) protein is Probable beta-glucosidase H (bglH).